A 706-amino-acid chain; its full sequence is Integrator complex subunit 13 (706 aa).

The segment at 564–603 (PPEEEERKKRGRKREDKEDKSEKAVKDYEQEKSWQDSERL) is disordered. Residues 567-622 (EEERKKRGRKREDKEDKSEKAVKDYEQEKSWQDSERLKGILERGKEELAEAEIIKD) are a coiled coil. The short motif at 572-582 (KRGRKREDKED) is the Nuclear localization signal (NLS) element. Lys611 participates in a covalent cross-link: Glycyl lysine isopeptide (Lys-Gly) (interchain with G-Cter in SUMO2). Positions 615–636 (AEAEIIKDSPDSPEPPNKKPLV) are enriched in basic and acidic residues. The segment at 615 to 650 (AEAEIIKDSPDSPEPPNKKPLVEMDETPQVEKSKGP) is disordered. 3 positions are modified to phosphoserine: Ser623, Ser626, and Ser678. Residues 649-694 (GPVSLLSLWSNRINTANSRKHQEFAGRLNSVNNRAELYQHLKEENG) form a cleavage module binding motif (CMBM) region.

It belongs to the Integrator subunit 13 family. As to quaternary structure, component of the Integrator complex, composed of core subunits INTS1, INTS2, INTS3, INTS4, INTS5, INTS6, INTS7, INTS8, INTS9/RC74, INTS10, INTS11/CPSF3L, INTS12, INTS13, INTS14 and INTS15. The core complex associates with protein phosphatase 2A subunits PPP2CA and PPP2R1A, to form the Integrator-PP2A (INTAC) complex. INTS13 is part of the tail subcomplex, composed of INTS10, INTS13, INTS14 and INTS15. Interacts with transcription factors ZNF609 and ZNF655. Interacts with PAFAH1B1; this interaction may be required for proper recruitment of dynein complexes to the nuclear envelope at prophase. In terms of tissue distribution, widely expressed. Tends to be up-regulated in seminomas compared to normal testis.

The protein resides in the nucleus. It localises to the cytoplasm. In terms of biological role, component of the integrator complex, a multiprotein complex that terminates RNA polymerase II (Pol II) transcription in the promoter-proximal region of genes. The integrator complex provides a quality checkpoint during transcription elongation by driving premature transcription termination of transcripts that are unfavorably configured for transcriptional elongation: the complex terminates transcription by (1) catalyzing dephosphorylation of the C-terminal domain (CTD) of Pol II subunit POLR2A/RPB1 and SUPT5H/SPT5, (2) degrading the exiting nascent RNA transcript via endonuclease activity and (3) promoting the release of Pol II from bound DNA. The integrator complex is also involved in terminating the synthesis of non-coding Pol II transcripts, such as enhancer RNAs (eRNAs), small nuclear RNAs (snRNAs), telomerase RNAs and long non-coding RNAs (lncRNAs). Within the integrator complex, INTS13 is part of the integrator tail module and acts as a platform for the recruitment of transcription factors at promoters. At prophase, mediates recruitment of cytoplasmic dynein to the nuclear envelope, a step important for proper centrosome-nucleus coupling. At G2/M phase, may be required for proper spindle formation and execution of cytokinesis. The sequence is that of Integrator complex subunit 13 from Homo sapiens (Human).